Reading from the N-terminus, the 351-residue chain is Histidine-rich glycoprotein (351 aa).

A signal peptide spans M1–S23. Residues N24–L47 constitute a propeptide that is removed on maturation. N40 is a glycosylation site (N-linked (GlcNAc...) asparagine). Residues L57–E91 show a composition bias toward basic and acidic residues. The tract at residues L57–H351 is disordered. 6 repeat units span residues E59–H74, E75–H90, E91–H107, P108–H123, A124–H138, and A139–H153. The interval E59 to H90 is 2 X 16 AA tandem repeats. Residues E91 to H123 form a 2 X 17 AA tandem repeats region. The segment covering E92–H351 has biased composition (basic residues). The tract at residues A124–H153 is 2 X 15 AA tandem repeats. The segment at A173–H351 is 18 X 10 AA tandem repeats.

In Plasmodium lophurae, this protein is Histidine-rich glycoprotein.